We begin with the raw amino-acid sequence, 521 residues long: Glutamyl-tRNA(Gln) amidotransferase subunit A, mitochondrial (521 aa).

Residues Lys-61 and Ser-139 each act as charge relay system in the active site. Ser-163 (acyl-ester intermediate) is an active-site residue.

It belongs to the amidase family. GatA subfamily. As to quaternary structure, subunit of the heterotrimeric GatCAB amidotransferase (AdT) complex, composed of A, B and C subunits.

Its subcellular location is the mitochondrion. It carries out the reaction L-glutamyl-tRNA(Gln) + L-glutamine + ATP + H2O = L-glutaminyl-tRNA(Gln) + L-glutamate + ADP + phosphate + H(+). In terms of biological role, allows the formation of correctly charged Gln-tRNA(Gln) through the transamidation of misacylated Glu-tRNA(Gln) in the mitochondria. The reaction takes place in the presence of glutamine and ATP through an activated gamma-phospho-Glu-tRNA(Gln). This chain is Glutamyl-tRNA(Gln) amidotransferase subunit A, mitochondrial, found in Ajellomyces capsulatus (strain G186AR / H82 / ATCC MYA-2454 / RMSCC 2432) (Darling's disease fungus).